The chain runs to 244 residues: Acetoacetate decarboxylase (244 aa).

The Schiff-base intermediate with acetoacetate role is filled by Lys115.

The protein belongs to the ADC family. As to quaternary structure, homododecamer.

It catalyses the reaction acetoacetate + H(+) = acetone + CO2. Functionally, catalyzes the conversion of acetoacetate to acetone and carbon dioxide. This Clostridium acetobutylicum (strain ATCC 824 / DSM 792 / JCM 1419 / IAM 19013 / LMG 5710 / NBRC 13948 / NRRL B-527 / VKM B-1787 / 2291 / W) protein is Acetoacetate decarboxylase.